The primary structure comprises 645 residues: Sodium-dependent nutrient amino acid transporter 1 (645 aa).

Residues 1–48 form a disordered region; sequence MELKTMPHNGANGSPQHNNNNNSNNNNNVSSDTKTDNNEKEAQKKDEG. Over 1 to 51 the chain is Cytoplasmic; sequence MELKTMPHNGANGSPQHNNNNNSNNNNNVSSDTKTDNNEKEAQKKDEGRTN. Over residues 18–32 the composition is skewed to low complexity; sequence NNNNNSNNNNNVSSD. Basic and acidic residues predominate over residues 33–48; sequence TKTDNNEKEAQKKDEG. 3 helical membrane-spanning segments follow: residues 52 to 72, 85 to 105, and 138 to 158; these read WSNG…LGNV, GAFL…MYYL, and TICI…YLFV. 2 N-linked (GlcNAc...) asparagine glycosylation sites follow: Asn191 and Asn205. 7 consecutive transmembrane segments (helical) span residues 234–254, 264–284, 313–333, 347–367, 407–427, 454–474, and 480–500; these read IPDW…FLVI, AAYF…GRAV, AVVQ…MFAS, IVTT…FAIL, LFSV…IVAL, CGFL…LTLV, and TYVV…IYGL. N-linked (GlcNAc...) asparagine glycosylation occurs at Asn514. 2 helical membrane passes run 522–542 and 559–579; these read CWSF…MATI and AGWL…WWYI.

This sequence belongs to the sodium:neurotransmitter symporter (SNF) (TC 2.A.22) family.

Its subcellular location is the membrane. In terms of biological role, unusual broad substrate spectrum amino acid:sodium cotransporter that promotes absorption of the D isomers of essential amino acids. Neutral amino acids are the preferred substrates, especially methionine and phenylalanine. In Drosophila mojavensis (Fruit fly), this protein is Sodium-dependent nutrient amino acid transporter 1.